Here is a 53-residue protein sequence, read N- to C-terminus: Tsetse thrombin inhibitor (53 aa).

The signal sequence occupies residues 1 to 21; the sequence is MKFFTVLFFLLSIIYLIVAAP.

In terms of tissue distribution, expressed at high levels in salivary glands and midguts of adult tsetse flies.

It localises to the secreted. Functionally, potent and specific inhibitor of human thrombin. It is also a potent inhibitor of thrombin-induced platelet aggregation. It is capable of antagonizing host hemostasis and facilitating blood feeding. The protein is Tsetse thrombin inhibitor (TTI) of Glossina morsitans morsitans (Savannah tsetse fly).